The following is a 310-amino-acid chain: 4-hydroxyproline 2-epimerase (310 aa).

Catalysis depends on cysteine 85, which acts as the Proton acceptor. Substrate-binding positions include 86-87, histidine 205, and aspartate 231; that span reads GH. Cysteine 235 serves as the catalytic Proton donor. A substrate-binding site is contributed by 236–237; that stretch reads GT.

The protein belongs to the proline racemase family.

It carries out the reaction trans-4-hydroxy-L-proline = cis-4-hydroxy-D-proline. Functionally, catalyzes the epimerization of trans-4-hydroxy-L-proline (t4LHyp) to cis-4-hydroxy-D-proline (c4DHyp). May be involved in a degradation pathway of t4LHyp, which would allow L.aggregata to grow on t4LHyp as a sole carbon source. Displays no proline racemase activity. This Roseibium aggregatum (strain ATCC 25650 / DSM 13394 / JCM 20685 / NBRC 16684 / NCIMB 2208 / IAM 12614 / B1) (Stappia aggregata) protein is 4-hydroxyproline 2-epimerase.